The chain runs to 144 residues: Necrosis-inducing secreted protein 1 (144 aa).

A signal peptide spans 1 to 19; it reads MQFRASIAAAAGLFALANA. N-linked (GlcNAc...) asparagine glycans are attached at residues N88, N126, and N133. Positions 103–132 are BAK1/SERK3-binding; sequence QYVVAAGLYSLYGASSSPTLSHYNVTVTVG.

This sequence belongs to the NIS1 effector family.

The protein localises to the secreted. It localises to the host cytoplasm. In terms of biological role, secreted effector that induces necrotic lesions in Nicotiana benthamiana. Interacts with the host receptor-like kinases (RLKs) BAK1/SERK3 and BKK1/SERK4, inhibits their kinase activity and suppresses INF1-induced pathogen-associated molecular pattern (PAMP)-triggered immunity (PTI) in N.benthamiana. Also interacts with the host receptor-like cytoplasmic kinase (RLCK) BIK1 and inhibits its kinase activity, thereby inhibiting PAMP-induced ROS generation. In PTI, phosphorylation relaying by RLKs and RLCKs is critical for the initiation of downstream signaling. The chain is Necrosis-inducing secreted protein 1 from Colletotrichum higginsianum (strain IMI 349063) (Crucifer anthracnose fungus).